We begin with the raw amino-acid sequence, 293 residues long: Protease HtpX (293 aa).

2 helical membrane passes run 4 to 24 (ISLF…VLSL) and 33 to 53 (AGLM…SLLM). His139 is a Zn(2+) binding site. Glu140 is a catalytic residue. Position 143 (His143) interacts with Zn(2+). Helical transmembrane passes span 158–178 (VVNT…AGFM) and 193–213 (LVYF…ASII). Glu222 provides a ligand contact to Zn(2+).

The protein belongs to the peptidase M48B family. Zn(2+) serves as cofactor.

It localises to the cell inner membrane. This Sodalis glossinidius (strain morsitans) protein is Protease HtpX.